The sequence spans 782 residues: MRQKTLDVLEFEKIKSFVADETISDLGREKVQEMAPASNFDTVEFQMNETDEISQIYNKHRLPSLSGLAKVSPLVHRASIGGVLNVGELNRIKRLVQVQNQFKTFYNQMLEEDEEVKYPILHDKMNHLPILTDLFKEINEKCDAHDLFDHASYTLQSIRSKISRTNQRIRQNLDRIVKNQGNQKKLSDAIVTVRNDRNVIPVKAEYRQDFNGIVHDQSASGQTLYIEPNSVVEMNNQISRLRNDEAVERERILTELTGLVSAESDALLVAESVMGQIDFLIAKARYARTIKGTKPTFKEERTIYLPNAFHPLLDKDTVVANTIEFIDDVETVIITGPNTGGKTVTLKTLGLIIVMAQSGLLIPTLDGSQLSIFENVYCDIGDEQSIEQSLSTFSSHMKNIVEILQDADQNSLILFDELGAGTDPSEGAALAMSILDYVRRLGSLVMATTHYPELKAYSYNREGVMNASVEFDVDTLSPTYKLLMGVPGRSNAFDISKKLGLSLNIINKAKTMIGTDEQEINAMIESLEHNSKRVDQQRIELDRLVREAQETHDALSKQYQQYQNYEKSLMEEAKEKANQRVKSATKEADEILKELRNLRDHKGAEVKEHELIDKKKQLDDQYEAKSIKQHVQKKKYDTIHAGDEVKVLSYGQKGEVLELVGNEEAVVQMGIIKMKLPIEDLEKTKKKKEKPTKMVTRQNRQTIKTELDLRGYRYEEALNELDQYLDQAVLSNYEQVYIIHGKGTGALQKGVQQHLKKHKSVRQFRGGMPNEGGFGVTVAELK.

336–343 (GPNTGGKT) lines the ATP pocket. Residues 707–782 (LDLRGYRYEE…GFGVTVAELK (76 aa)) enclose the Smr domain.

Belongs to the DNA mismatch repair MutS family. MutS2 subfamily. As to quaternary structure, homodimer. Binds to stalled ribosomes, contacting rRNA.

In terms of biological role, endonuclease that is involved in the suppression of homologous recombination and thus may have a key role in the control of bacterial genetic diversity. Its function is as follows. Acts as a ribosome collision sensor, splitting the ribosome into its 2 subunits. Detects stalled/collided 70S ribosomes which it binds and splits by an ATP-hydrolysis driven conformational change. Acts upstream of the ribosome quality control system (RQC), a ribosome-associated complex that mediates the extraction of incompletely synthesized nascent chains from stalled ribosomes and their subsequent degradation. Probably generates substrates for RQC. In Staphylococcus epidermidis (strain ATCC 12228 / FDA PCI 1200), this protein is Endonuclease MutS2.